The primary structure comprises 155 residues: Transcriptional regulator MraZ (155 aa).

SpoVT-AbrB domains follow at residues 7 to 54 and 83 to 126; these read TYEC…PMEE and VKTV…DKDK.

Belongs to the MraZ family. Forms oligomers.

It is found in the cytoplasm. Its subcellular location is the nucleoid. The polypeptide is Transcriptional regulator MraZ (Christiangramia forsetii (strain DSM 17595 / CGMCC 1.15422 / KT0803) (Gramella forsetii)).